The primary structure comprises 380 residues: Septin homolog spn6 (380 aa).

The Septin-type G domain occupies 27-297 (KECGLTIMLC…ERYRREQLTN (271 aa)). Residues 37 to 44 (GASGTGKT) form a G1 motif region. GTP contacts are provided by residues 37–44 (GASGTGKT), Thr72, Gly98, 177–185 (KADTFTTPE), and Arg246. The segment at 95-98 (DTPG) is G3 motif. The G4 motif stretch occupies residues 176–179 (AKAD). Residues 304-380 (KLKKEHYERL…KSYKGRGHKK (77 aa)) are a coiled coil.

It belongs to the TRAFAC class TrmE-Era-EngA-EngB-Septin-like GTPase superfamily. Septin GTPase family. As to quaternary structure, component of the sporulation-specific septin complex composed of at least spn2, spn5, spn6 and spn7.

The protein resides in the cytoplasm. Its subcellular location is the forespore membrane. Septin-like protein involved in the correct orientation of forespore membrane extension during sporulation. In Schizosaccharomyces pombe (strain 972 / ATCC 24843) (Fission yeast), this protein is Septin homolog spn6 (spn6).